A 161-amino-acid polypeptide reads, in one-letter code: Regulator of ribonuclease activity A (161 aa).

This sequence belongs to the RraA family. Homotrimer. Binds to both RNA-binding sites in the C-terminal region of Rne and to RhlB.

Its subcellular location is the cytoplasm. Functionally, globally modulates RNA abundance by binding to RNase E (Rne) and regulating its endonucleolytic activity. Can modulate Rne action in a substrate-dependent manner by altering the composition of the degradosome. Modulates RNA-binding and helicase activities of the degradosome. This Photobacterium profundum (strain SS9) protein is Regulator of ribonuclease activity A.